The following is a 373-amino-acid chain: MVKWSELPPEILHLISLKIDNPFDLIHFRSVCSFWRSSSLLKFRHMTSLRCPLPLDPGGCGDDCHILSSRVYLLKCPNRDRPQYWMFKLQAKENGEVVLHSLFLRRNSSAYGCLYPSLSIDLLNCQIFELAQEHVACYSEWFELFECISKCEERIGFMGLNREKNEYMILGKLSFNGLAMYRSVDNRWTELEITPDSFFEGIVPFKGKFYAIDRTGKTTVVDPTLEVNTFQRSRPCDKTRKRWLLMTGDKLILVEMCTKSRYDFHIPNIREKKIWFEISELNEERNDWDQVEDMDGRVLFLEHYCTFSCLATEIPGFRANSIIFMDLWGGSNSYELESILVYEFNEKGVRSLRDKLEYIELFPFPPGWVISNG.

The F-box domain occupies Val-2 to Arg-50. Kelch repeat units follow at residues Asn-165–Gly-207 and Tyr-262–Ser-308.

In Arabidopsis thaliana (Mouse-ear cress), this protein is Putative F-box/kelch-repeat protein At5g24040.